Reading from the N-terminus, the 182-residue chain is NADH-quinone oxidoreductase subunit 9 (182 aa).

2 4Fe-4S ferredoxin-type domains span residues 43–73 (LTRHPNGLEKCIGCSLCAAACPAYAIYVEPA) and 89–118 (KVYEINMLRCIFCGLCEEACPTGAIVLGYD). [4Fe-4S] cluster-binding residues include C53, C56, S57, C59, C63, C98, I99, C101, C104, and C108.

It belongs to the complex I 23 kDa subunit family. As to quaternary structure, NDH-1 is composed of 15 different subunits, Nqo1 to Nqo15. The complex has a L-shaped structure, with the hydrophobic arm (subunits Nqo7, Nqo8 and Nqo10 to Nqo14) embedded in the membrane and the hydrophilic peripheral arm (subunits Nqo1 to Nqo6, Nqo9 and Nqo15) protruding into the bacterial cytoplasm. The hydrophilic domain contains all the redox centers. Requires [4Fe-4S] cluster as cofactor.

Its subcellular location is the cell membrane. The catalysed reaction is a quinone + NADH + 5 H(+)(in) = a quinol + NAD(+) + 4 H(+)(out). In terms of biological role, NDH-1 shuttles electrons from NADH, via FMN and iron-sulfur (Fe-S) centers, to quinones in the respiratory chain. The immediate electron acceptor for the enzyme in this species is menaquinone. Couples the redox reaction to proton translocation (for every two electrons transferred, four hydrogen ions are translocated across the cytoplasmic membrane), and thus conserves the redox energy in a proton gradient required for the synthesis of ATP. The role of the Nqo9 subunit appears to provide a 'connecting chain' of two clusters between cluster N5 and the terminal cluster N2, and to stabilize the structure of the complex by interacting with other subunits. The chain is NADH-quinone oxidoreductase subunit 9 (nqo9) from Thermus thermophilus (strain ATCC 27634 / DSM 579 / HB8).